The following is a 218-amino-acid chain: Small ribosomal subunit protein uS3c (218 aa).

The region spanning 47–118 (VQKNMRIFSG…KLNIAITRIG (72 aa)) is the KH type-2 domain.

Belongs to the universal ribosomal protein uS3 family. Part of the 30S ribosomal subunit.

Its subcellular location is the plastid. The protein localises to the chloroplast. The sequence is that of Small ribosomal subunit protein uS3c (rps3) from Cucumis sativus (Cucumber).